A 342-amino-acid chain; its full sequence is Phenylalanine--tRNA ligase alpha subunit (342 aa).

Glutamate 255 contributes to the Mg(2+) binding site.

The protein belongs to the class-II aminoacyl-tRNA synthetase family. Phe-tRNA synthetase alpha subunit type 1 subfamily. As to quaternary structure, tetramer of two alpha and two beta subunits. It depends on Mg(2+) as a cofactor.

It localises to the cytoplasm. The catalysed reaction is tRNA(Phe) + L-phenylalanine + ATP = L-phenylalanyl-tRNA(Phe) + AMP + diphosphate + H(+). The polypeptide is Phenylalanine--tRNA ligase alpha subunit (Pelotomaculum thermopropionicum (strain DSM 13744 / JCM 10971 / SI)).